The chain runs to 125 residues: Cu-Zn superoxide dismutase-like protein (125 aa).

A disulfide bridge connects residues Cys-52 and Cys-102.

This sequence belongs to the Cu-Zn superoxide dismutase family.

The protein resides in the host cytoplasm. Its function is as follows. Virion protein with no enzymatic activity. In Bos taurus (Bovine), this protein is Cu-Zn superoxide dismutase-like protein.